A 571-amino-acid chain; its full sequence is Urease subunit alpha (571 aa).

One can recognise a Urease domain in the interval 133–571; that stretch reads GGIDTHVHFI…LPLTQRYFLF (439 aa). Positions 138, 140, and 221 each coordinate Ni(2+). Residue K221 is modified to N6-carboxylysine. Substrate is bound at residue H223. H250 and H276 together coordinate Ni(2+). Catalysis depends on H324, which acts as the Proton donor. A Ni(2+)-binding site is contributed by D364.

Belongs to the metallo-dependent hydrolases superfamily. Urease alpha subunit family. Heterotrimer of UreA (gamma), UreB (beta) and UreC (alpha) subunits. Three heterotrimers associate to form the active enzyme. Ni cation is required as a cofactor. Post-translationally, carboxylation allows a single lysine to coordinate two nickel ions.

The protein localises to the cytoplasm. It carries out the reaction urea + 2 H2O + H(+) = hydrogencarbonate + 2 NH4(+). It functions in the pathway nitrogen metabolism; urea degradation; CO(2) and NH(3) from urea (urease route): step 1/1. This is Urease subunit alpha from Staphylococcus saprophyticus subsp. saprophyticus (strain ATCC 15305 / DSM 20229 / NCIMB 8711 / NCTC 7292 / S-41).